The primary structure comprises 163 residues: Gas vesicle protein H2 (163 aa).

A disordered region spans residues 57–92; sequence LGSDARSPSTPAGNADDAGDAETAHIETRASDDSDD. Over residues 78-88 the composition is skewed to basic and acidic residues; that stretch reads ETAHIETRASD.

It belongs to the gas vesicle GvpH family. As to quaternary structure, gvpF to GvpM interact with each other in vitro, and may form multi-subunit complex(es). Interacts with GvpC. Might interact with GvpA.

The protein localises to the gas vesicle. It is found in the cytoplasm. Functionally, a minor component of the gas vesicle, also found in soluble extracts. Proteins GvpF to GvpM might be involved in nucleating gas vesicle formation. Gas vesicles are hollow, gas filled proteinaceous nanostructures found in several microbial planktonic microorganisms. They allow positioning of halobacteria at the optimal depth for growth in the poorly aerated, shallow brine pools of their habitat. Expression of 2 c-vac DNA fragments containing 2 divergently transcribed regions (gvpE-gvpF-gvpG-gvpH-gvpI-gvpJ-gvpK-gvpL-gvpM and gvpA-gvpC-gvpN-gvpO) allows H.volcanii to produce gas vesicles. This chain is Gas vesicle protein H2, found in Halobacterium salinarum (strain ATCC 700922 / JCM 11081 / NRC-1) (Halobacterium halobium).